We begin with the raw amino-acid sequence, 151 residues long: Ribosome maturation factor RimP (151 aa).

The protein belongs to the RimP family.

The protein resides in the cytoplasm. Required for maturation of 30S ribosomal subunits. The sequence is that of Ribosome maturation factor RimP from Shewanella halifaxensis (strain HAW-EB4).